A 640-amino-acid polypeptide reads, in one-letter code: Threonine--tRNA ligase (640 aa).

The region spanning 1-60 (MKITFPDGAVKEFEPGVSTADIAASISPGLKKKALAGKLNGELLDLVTPIHEDGAIEIVT) is the TGS domain. The tract at residues 241–538 (DHRKLGKELD…LIEEYKGAFP (298 aa)) is catalytic. Zn(2+) is bound by residues Cys-334, His-385, and His-515.

This sequence belongs to the class-II aminoacyl-tRNA synthetase family. In terms of assembly, homodimer. It depends on Zn(2+) as a cofactor.

The protein localises to the cytoplasm. It carries out the reaction tRNA(Thr) + L-threonine + ATP = L-threonyl-tRNA(Thr) + AMP + diphosphate + H(+). Functionally, catalyzes the attachment of threonine to tRNA(Thr) in a two-step reaction: L-threonine is first activated by ATP to form Thr-AMP and then transferred to the acceptor end of tRNA(Thr). Also edits incorrectly charged L-seryl-tRNA(Thr). This chain is Threonine--tRNA ligase, found in Listeria monocytogenes serotype 4b (strain CLIP80459).